Here is a 698-residue protein sequence, read N- to C-terminus: Pheromone-regulated protein PRM7 (698 aa).

Disordered regions lie at residues 1–65, 133–183, 197–274, and 455–480; these read MYRT…IGNS, ESTT…SAVT, SVDQ…TVTI, and SASS…DSKT. Composition is skewed to low complexity over residues 9 to 56 and 158 to 183; these read EVTT…TTSA and VTTS…SAVT. Over residues 455–465 the composition is skewed to low complexity; sequence SASSSRSSATS.

In Saccharomyces cerevisiae (strain ATCC 204508 / S288c) (Baker's yeast), this protein is Pheromone-regulated protein PRM7 (PRM7).